Reading from the N-terminus, the 303-residue chain is Probable cell division protein WhiA (303 aa).

The segment at residues 272–303 (SIQQVADALEFPITKSGVNHRLRKINKIADDL) is a DNA-binding region (H-T-H motif).

The protein belongs to the WhiA family.

Functionally, involved in cell division and chromosome segregation. This Streptococcus pyogenes serotype M3 (strain ATCC BAA-595 / MGAS315) protein is Probable cell division protein WhiA.